Consider the following 662-residue polypeptide: Acetyl-coenzyme A synthetase (662 aa).

CoA contacts are provided by residues 197–200 (RKGK) and Thr-317. ATP contacts are provided by residues 393-395 (GEP), 417-422 (DTWWQT), Asp-510, and Arg-525. Position 533 (Ser-533) interacts with CoA. Residue Arg-536 coordinates ATP. 2 residues coordinate Mg(2+): His-549 and Val-552. The residue at position 623 (Lys-623) is an N6-acetyllysine.

Belongs to the ATP-dependent AMP-binding enzyme family. The cofactor is Mg(2+). Post-translationally, acetylated. Deacetylation by the SIR2-homolog deacetylase activates the enzyme.

The catalysed reaction is acetate + ATP + CoA = acetyl-CoA + AMP + diphosphate. Its function is as follows. Catalyzes the conversion of acetate into acetyl-CoA (AcCoA), an essential intermediate at the junction of anabolic and catabolic pathways. AcsA undergoes a two-step reaction. In the first half reaction, AcsA combines acetate with ATP to form acetyl-adenylate (AcAMP) intermediate. In the second half reaction, it can then transfer the acetyl group from AcAMP to the sulfhydryl group of CoA, forming the product AcCoA. This is Acetyl-coenzyme A synthetase from Helicobacter pylori (strain P12).